The chain runs to 298 residues: Triosephosphate isomerase, chloroplastic (298 aa).

Residues 1 to 18 show a composition bias toward pro residues; it reads MAARRPSPPPASPPPPRP. Residues 1–32 are disordered; the sequence is MAARRPSPPPASPPPPRPRSTTTTRTTSSASA. The transit peptide at 1 to 43 directs the protein to the chloroplast; the sequence is MAARRPSPPPASPPPPRPRSTTTTRTTSSASAAPAAAQRLVAM. Low complexity predominate over residues 19–32; that stretch reads RSTTTTRTTSSASA. Asn54 and Lys56 together coordinate substrate. Catalysis depends on His138, which acts as the Electrophile. At Cys186 the chain carries Cysteine derivative. The active-site Proton acceptor is Glu208.

It belongs to the triosephosphate isomerase family. Homodimer.

It is found in the plastid. The protein resides in the chloroplast. It catalyses the reaction D-glyceraldehyde 3-phosphate = dihydroxyacetone phosphate. It functions in the pathway carbohydrate biosynthesis; Calvin cycle. The protein is Triosephosphate isomerase, chloroplastic of Secale cereale (Rye).